The following is an 855-amino-acid chain: Probable inactive ATP-dependent zinc metalloprotease FTSHI 4, chloroplastic (855 aa).

Residues 1–78 (MTFYISSSLT…SFESTESSVS (78 aa)) constitute a chloroplast transit peptide. A helical transmembrane segment spans residues 242 to 262 (VATFVVWSMRLALFVSLYVWI). 356–363 (GPPGTGKT) is a binding site for ATP.

The protein belongs to the AAA ATPase family. In terms of assembly, homooligomer. Interacts with FtsHi2. In terms of tissue distribution, ubiquitous but preferentially expressed in young leaves.

It localises to the plastid. The protein localises to the chloroplast thylakoid membrane. Functionally, functions in chloroplast biogenesis and chloroplast division. Required for plastid development during embryogenesis. Might be involved in chaperone functions or play a structural role in the thylakoid FtsH complex. The protein is Probable inactive ATP-dependent zinc metalloprotease FTSHI 4, chloroplastic of Arabidopsis thaliana (Mouse-ear cress).